Here is a 132-residue protein sequence, read N- to C-terminus: Holo-[acyl-carrier-protein] synthase (132 aa).

Mg(2+) contacts are provided by Asp-8 and Glu-62.

It belongs to the P-Pant transferase superfamily. AcpS family. It depends on Mg(2+) as a cofactor.

It localises to the cytoplasm. It catalyses the reaction apo-[ACP] + CoA = holo-[ACP] + adenosine 3',5'-bisphosphate + H(+). Its function is as follows. Transfers the 4'-phosphopantetheine moiety from coenzyme A to a Ser of acyl-carrier-protein. The polypeptide is Holo-[acyl-carrier-protein] synthase (Leptothrix cholodnii (strain ATCC 51168 / LMG 8142 / SP-6) (Leptothrix discophora (strain SP-6))).